The primary structure comprises 671 residues: Synaptotagmin-like protein 4 (671 aa).

Residues leucine 4–glutamine 122 form the RabBD domain. The segment at cysteine 63–cysteine 105 adopts an FYVE-type zinc-finger fold. A disordered region spans residues serine 199–proline 243. Residues serine 201, serine 204, serine 217, serine 221, serine 274, and serine 289 each carry the phosphoserine modification. The C2 1 domain maps to valine 356 to leucine 478. The residue at position 488 (serine 488) is a Phosphoserine. The 127-residue stretch at proline 507–methionine 633 folds into the C2 2 domain.

In terms of assembly, part of a ternary complex containing STX1A and RAB27A. Can bind both dominant negative and dominant active mutants of RAB27A. Binds STXBP1, RAB3A, RAB8A and RAB27B. Interacts with MYO5A.

The protein resides in the membrane. It is found in the cell membrane. It localises to the cytoplasmic vesicle. The protein localises to the secretory vesicle membrane. Functionally, modulates exocytosis of dense-core granules and secretion of hormones in the pancreas and the pituitary. Interacts with vesicles containing negatively charged phospholipids in a Ca(2+)-independent manner. The chain is Synaptotagmin-like protein 4 (SYTL4) from Homo sapiens (Human).